We begin with the raw amino-acid sequence, 520 residues long: Amphoterin-induced protein 2 (520 aa).

The signal sequence occupies residues 1 to 37 (MSLRFHTLPTLPRAVKPGCRELLCLLVIAVMVSPSSS). The LRRNT domain occupies 38–67 (GLCPTACICATDIVSCTNKNLSKVPGNLFR). At 38 to 398 (GLCPTACICA…SHHAHEAFNT (361 aa)) the chain is on the extracellular side. 2 disulfide bridges follow: Cys-40–Cys-46 and Cys-44–Cys-53. N-linked (GlcNAc...) asparagine glycosylation is present at Asn-57. LRR repeat units follow at residues 68 to 89 (LIKR…WIPV), 93 to 114 (KLST…SFST), 117 to 138 (NLKC…MFQE), 141 to 162 (VLEV…AFGG), 165 to 186 (HLQK…LYVG), and 192 to 213 (DLTF…HINL). Residue Asn-103 is glycosylated (N-linked (GlcNAc...) asparagine). The LRRCT domain occupies 227–283 (NPFVCDCSLYSLLTFWYRRHFNSVTDFKHDYTCRLWLDSRHSHQLLLLQDSFLNCSH). 2 disulfides stabilise this stretch: Cys-231–Cys-259 and Cys-233–Cys-281. N-linked (GlcNAc...) asparagine glycans are attached at residues Asn-280, Asn-287, Asn-344, Asn-372, Asn-380, Asn-383, and Asn-387. Residues 288 to 378 (GSFHALGFIH…RLLNETVDIM (91 aa)) form the Ig-like C2-type domain. Cysteines 309 and 362 form a disulfide. A helical membrane pass occupies residues 399–419 (AFTTLAACVVSIVLVLLYLYL). Residues 420-520 (TPCPCKCRDK…FSDTPFVAST (101 aa)) are Cytoplasmic-facing. Disordered regions lie at residues 437–458 (QSNA…AEDR) and 498–520 (SRAK…VAST).

This sequence belongs to the immunoglobulin superfamily. AMIGO family. Binds itself as well as AMIGO1 and AMIGO3. Highest levels in the lung. High levels in cerebellar granule neurons and Purkinje cells. Also in pyramidal cells between CA1 and CA3 regions of the hippocampus and granule cells of the dentate gyrus.

It localises to the cell membrane. The protein resides in the nucleus. Functionally, required for depolarization-dependent survival of cultured cerebellar granule neurons. May mediate homophilic as well as heterophilic cell-cell interaction with AMIGO1 or AMIGO3. May contribute to signal transduction through its intracellular domain. This Rattus norvegicus (Rat) protein is Amphoterin-induced protein 2.